The primary structure comprises 209 residues: NADH-quinone oxidoreductase subunit C (209 aa).

The protein belongs to the complex I 30 kDa subunit family. As to quaternary structure, NDH-1 is composed of 14 different subunits. Subunits NuoB, C, D, E, F, and G constitute the peripheral sector of the complex.

It localises to the cell inner membrane. It carries out the reaction a quinone + NADH + 5 H(+)(in) = a quinol + NAD(+) + 4 H(+)(out). In terms of biological role, NDH-1 shuttles electrons from NADH, via FMN and iron-sulfur (Fe-S) centers, to quinones in the respiratory chain. The immediate electron acceptor for the enzyme in this species is believed to be ubiquinone. Couples the redox reaction to proton translocation (for every two electrons transferred, four hydrogen ions are translocated across the cytoplasmic membrane), and thus conserves the redox energy in a proton gradient. The protein is NADH-quinone oxidoreductase subunit C of Xanthobacter autotrophicus (strain ATCC BAA-1158 / Py2).